Reading from the N-terminus, the 160-residue chain is 3-dehydroquinate dehydratase (160 aa).

Residue Tyr-22 is the Proton acceptor of the active site. Substrate is bound by residues Asn-73, His-79, and Asp-86. The active-site Proton donor is the His-99. Substrate-binding positions include 100–101 and Arg-110; that span reads IS.

This sequence belongs to the type-II 3-dehydroquinase family. As to quaternary structure, homododecamer.

It carries out the reaction 3-dehydroquinate = 3-dehydroshikimate + H2O. It participates in metabolic intermediate biosynthesis; chorismate biosynthesis; chorismate from D-erythrose 4-phosphate and phosphoenolpyruvate: step 3/7. Its function is as follows. Catalyzes a trans-dehydration via an enolate intermediate. This is 3-dehydroquinate dehydratase from Sulfurimonas denitrificans (strain ATCC 33889 / DSM 1251) (Thiomicrospira denitrificans (strain ATCC 33889 / DSM 1251)).